The sequence spans 126 residues: MAVPEELKYSKEHEWVKVEGDTVTIGITEYAQGELGDIVFVELPETEDDIEESESFGSVESVKTVSELYAPVSGSVVEINEELEDSPEFVNESPYEKAWMVKVKLNDESQLDDLLSADQYKEMIGE.

In terms of domain architecture, Lipoyl-binding spans 22 to 104 (TVTIGITEYA…YEKAWMVKVK (83 aa)). Lys63 is modified (N6-lipoyllysine).

Belongs to the GcvH family. The glycine cleavage system is composed of four proteins: P, T, L and H. The cofactor is (R)-lipoate.

In terms of biological role, the glycine cleavage system catalyzes the degradation of glycine. The H protein shuttles the methylamine group of glycine from the P protein to the T protein. Is also involved in protein lipoylation via its role as an octanoyl/lipoyl carrier protein intermediate. The sequence is that of Glycine cleavage system H protein from Staphylococcus carnosus (strain TM300).